Consider the following 464-residue polypeptide: Juvenile hormone epoxide hydrolase 1 (464 aa).

Residues 7–27 (MLIFAAIAGIAVLYYQITKEL) form a helical membrane-spanning segment. Asp224 acts as the Nucleophile in catalysis. The Proton donor role is filled by Tyr370. His427 functions as the Proton acceptor in the catalytic mechanism.

Belongs to the peptidase S33 family. In terms of tissue distribution, developing oocytes, fat body and midgut epithelium of adults.

The protein resides in the microsome membrane. Its subcellular location is the endoplasmic reticulum membrane. The catalysed reaction is cis-stilbene oxide + H2O = (1R,2R)-hydrobenzoin. It carries out the reaction 1-(4-methoxyphenyl)-N-methyl-N-[(3-methyloxetan-3-yl)methyl]methanamine + H2O = 2-{[(4-methoxybenzyl)(methyl)amino]methyl}-2-methylpropane-1,3-diol. Its function is as follows. Catalyzes juvenile hormone hydrolysis. In Ctenocephalides felis (Cat flea), this protein is Juvenile hormone epoxide hydrolase 1.